The primary structure comprises 211 residues: MIIRKQIFPFLSQNRPWTIINRIQSERYSASYEPSPELLKQSSRRLEQAGYSVKNAETITNLMRTITGEALTELEKNIGFKAKQESVSFQQKRTFLQIRKYLETIEENEFDKVRKSSDKLINEIEKTKSSLREDVKTALSEVRLNLNLEKGRMKDAATSRNTNIHENETKILNEVDILHKEINDMKIQTNQWFTGFVGVVSSVVLIILFYF.

A coiled-coil region spans residues Ile105–Arg143. The helical transmembrane segment at Gln191–Phe211 threads the bilayer.

Belongs to the CCDC90 family.

The protein localises to the mitochondrion. It is found in the membrane. This is an uncharacterized protein from Schizosaccharomyces pombe (strain 972 / ATCC 24843) (Fission yeast).